We begin with the raw amino-acid sequence, 151 residues long: Small ribosomal subunit protein uS15y (151 aa).

It belongs to the universal ribosomal protein uS15 family.

The protein is Small ribosomal subunit protein uS15y (RPS13B) of Arabidopsis thaliana (Mouse-ear cress).